We begin with the raw amino-acid sequence, 950 residues long: MRLFSLLPLLALLVVQAAGQSEVTSDDPATDAGSTTNSTTDTKPRIPSQDEILGQMPSINPIRTGNPQMDAFYMMFPALGSLLKWGSLFPAYSILGAIPDNLQPTAAASKVVLVLADDATAKTRVARQNPPPNPLGQLMNWPALPQDFQLPSMDLGPQVGSFLAQLPAMPTVPGLLGAAAPVPAPAPAPAAAPPPAPAPAADPPAAPVPDAPQPAILGQAALQNAFTFFNPANFDASSLLGQSVPTFAPPNLDFVAQMQRQFFPGMTPAQPAAAGTDAQASDISEVRVRPEDPYSQEAQMKIKSALEMEQERQQQAQVKDQEQVPLLWFRMPTTQNQDATEEKTLEDLRVEAKLRAFERQVIAELRMLQKIELMAKQMRSSAAAQNGDSPYRISYPLSRTPIHKITRADIEQALRDDYVRRLVNKEAQRRARNSGINTQKANALKRQAKSQDQTLSKEDIVQIMAYAYRMANEQMESEKGKQDKVYAAYRTEQNPMMMQQRQWSEEQAKIQQNQQQIQQNPMMMQQRQWSEEQAKIQQNQQQIQQNPMMMQQRQWSEEQAKIQQNQQQIQQNPMMMQQRQWSEEQAKIQQNQQQIQQNPMMVQQRQWSEEQAKIQQNQQQIQQNPMMMQQRQWSEEQAKIQHDQQMAQQMAQQGLMMTEQRQRQWSEDQAKIQQAQQMAQQTPMMMPQMQQRQWTEDPQMVQQMQQRQWAEDQTRMQMAQQNPMMQQQRQMAENPQMMQQRQWSEEQTKIEQAQQMAQQNQMMMQQMQQRQWSEDQAQIQQQQRQMMQQTPMMMKERQWAEENPQSVQQQGPMMMQQQMPSMMQREVEDEDNKAEDDLVGEAGPQMPENEGTARHKVDALGVGGNKRKKSKSKSAPPTVINYYYAAPQRPVVQSYGTSYGGGGYGSNAYGVPRPVNSYQSQGYRAAVGNDEVDEMLRQHQTMARATHFRQ.

An N-terminal signal peptide occupies residues 1–19 (MRLFSLLPLLALLVVQAAG). Disordered regions lie at residues 23 to 60 (VTSD…PSIN), 184 to 212 (APAP…PDAP), and 268 to 294 (PAQP…EDPY). Over residues 32–41 (AGSTTNSTTD) the composition is skewed to polar residues. Over residues 268–280 (PAQPAAAGTDAQA) the composition is skewed to low complexity. A run of 5 repeats spans residues 493 to 518 (QNPM…QQIQ), 519 to 544 (QNPM…QQIQ), 545 to 570 (QNPM…QQIQ), 571 to 596 (QNPM…QQIQ), and 597 to 622 (QNPM…QQIQ). The segment at 493-788 (QNPMMMQQRQ…IQQQQRQMMQ (296 aa)) is 12 X 26 AA approximate tandem repeats, Glu, Met-rich. The stretch at 623 to 652 (QNPMMMQQRQWSEEQAKIQHDQQMAQQMAQ) is one 6; approximate repeat. One copy of the 7; approximate repeat lies at 653–680 (QGLMMTEQRQRQWSEDQAKIQQAQQMAQ). An 8; approximate repeat occupies 681–696 (QTPMMMPQMQQRQWTE). Residues 697 to 720 (DPQMVQQMQQRQWAEDQTRMQMAQ) form a 9; approximate repeat. The stretch at 721 to 733 (QNPMMQQQRQMAE) is one 10; approximate repeat. The 11; approximate repeat unit spans residues 734–758 (NPQMMQQRQWSEEQTKIEQAQQMAQ). The stretch at 759–788 (QNQMMMQQMQQRQWSEDQAQIQQQQRQMMQ) is one 12; approximate repeat. Positions 843-875 (GPQMPENEGTARHKVDALGVGGNKRKKSKSKSA) are disordered.

Proteolytic cleavage of isoform FC106 generates 2 further products, S80 and S60.

It is found in the secreted. Its function is as follows. Required for proper assembly of the eggshell. In Drosophila melanogaster (Fruit fly), this protein is Defective chorion protein, FC106 isoform.